A 391-amino-acid polypeptide reads, in one-letter code: Isocitrate dehydrogenase [NADP] (391 aa).

D-threo-isocitrate is bound by residues S102, N104, R108, R118, and R142. D283 provides a ligand contact to Mg(2+).

It belongs to the isocitrate and isopropylmalate dehydrogenases family. Homodimer. Mg(2+) is required as a cofactor. The cofactor is Mn(2+).

It carries out the reaction D-threo-isocitrate + NADP(+) = 2-oxoglutarate + CO2 + NADPH. In terms of biological role, catalyzes the oxidative decarboxylation of isocitrate to 2-oxoglutarate and carbon dioxide with the concomitant reduction of NADP(+). This is Isocitrate dehydrogenase [NADP] (icd) from Streptococcus salivarius.